The primary structure comprises 692 residues: DNA topoisomerase 4 subunit B (692 aa).

ATP-binding positions include Tyr53, Asn93, Asp120, 162-168 (GLHGVGI), and Lys393. The region spanning 473–587 (AELFIVEGDS…AGHLYLAVPP (115 aa)) is the Toprim domain. Glu479, Asp552, and Asp554 together coordinate Mg(2+).

Belongs to the type II topoisomerase family. ParE type 1 subfamily. In terms of assembly, heterotetramer composed of ParC and ParE. Mg(2+) is required as a cofactor. Mn(2+) serves as cofactor. The cofactor is Ca(2+).

The enzyme catalyses ATP-dependent breakage, passage and rejoining of double-stranded DNA.. Its function is as follows. Topoisomerase IV is essential for chromosome segregation. It relaxes supercoiled DNA. Performs the decatenation events required during the replication of a circular DNA molecule. The polypeptide is DNA topoisomerase 4 subunit B (Bartonella bacilliformis (strain ATCC 35685 / KC583 / Herrer 020/F12,63)).